We begin with the raw amino-acid sequence, 752 residues long: Polyribonucleotide nucleotidyltransferase (752 aa).

Mg(2+) is bound by residues Asp-519 and Asp-525. Residues Pro-585–Ile-644 form the KH domain. Residues Gly-656–Val-728 form the S1 motif domain. The interval Pro-727–Ile-752 is disordered.

This sequence belongs to the polyribonucleotide nucleotidyltransferase family. Mg(2+) is required as a cofactor.

It is found in the cytoplasm. It catalyses the reaction RNA(n+1) + phosphate = RNA(n) + a ribonucleoside 5'-diphosphate. In terms of biological role, involved in mRNA degradation. Catalyzes the phosphorolysis of single-stranded polyribonucleotides processively in the 3'- to 5'-direction. In Pseudarthrobacter chlorophenolicus (strain ATCC 700700 / DSM 12829 / CIP 107037 / JCM 12360 / KCTC 9906 / NCIMB 13794 / A6) (Arthrobacter chlorophenolicus), this protein is Polyribonucleotide nucleotidyltransferase.